The following is a 680-amino-acid chain: Meiotic recombination protein REC8 (680 aa).

2 stretches are compositionally biased toward low complexity: residues 278–290 and 436–446; these read ENDNENNSNGGED and SLVSTQSSSST. Disordered stretches follow at residues 278–297, 431–467, and 540–560; these read ENDNENNSNGGEDTSVENEG, RKRAHSLVSTQSSSSTRSHEYGRKSFRNNKNDNYSSD, and EQNFAEEDDSSNSCFSDGSQQ. Positions 550-560 are enriched in polar residues; the sequence is SNSCFSDGSQQ.

The protein belongs to the rad21 family. In terms of processing, proteolytically cleaved by ESP1. Post-translationally, phosphorylated by CDC5. CDC5 phosphorylation is necessary for cleavage by ESP1 and subsequent removal from chromosome arms.

The protein localises to the nucleus. The protein resides in the chromosome. Its subcellular location is the centromere. In terms of biological role, replaces the SCC1 mitosis-specific cohesin to ensure sister chromatid cohesion during meiosis. Is cleaved by ESP1 shortly before the first meiotic division, and dissociates from chromatin, allowing sister chromatids to segregate. Is protected from cleavage by SPO13. Promotes localization of the LINC complex subunit MPS3 on nuclear envelope in mitotic cells. This chain is Meiotic recombination protein REC8, found in Saccharomyces cerevisiae (strain ATCC 204508 / S288c) (Baker's yeast).